The primary structure comprises 205 residues: Ribosomal RNA small subunit methyltransferase G (205 aa).

Residues G76, L81, 127-128 (IE), and R140 each bind S-adenosyl-L-methionine.

This sequence belongs to the methyltransferase superfamily. RNA methyltransferase RsmG family.

Its subcellular location is the cytoplasm. It catalyses the reaction guanosine(527) in 16S rRNA + S-adenosyl-L-methionine = N(7)-methylguanosine(527) in 16S rRNA + S-adenosyl-L-homocysteine. Its function is as follows. Specifically methylates the N7 position of guanine in position 527 of 16S rRNA. The chain is Ribosomal RNA small subunit methyltransferase G from Francisella tularensis subsp. tularensis (strain FSC 198).